Consider the following 637-residue polypeptide: tRNA 5-methylaminomethyl-2-thiouridine biosynthesis bifunctional protein MnmC (637 aa).

The tract at residues 1 to 231 is tRNA (mnm(5)s(2)U34)-methyltransferase; that stretch reads MPIDPARLAF…KRQMCRGRHR (231 aa). Positions 250-637 are FAD-dependent cmnm(5)s(2)U34 oxidoreductase; it reads IGAGLAGSST…RPARGMTREG (388 aa).

The protein in the N-terminal section; belongs to the methyltransferase superfamily. tRNA (mnm(5)s(2)U34)-methyltransferase family. In the C-terminal section; belongs to the DAO family. Requires FAD as cofactor.

Its subcellular location is the cytoplasm. The catalysed reaction is 5-aminomethyl-2-thiouridine(34) in tRNA + S-adenosyl-L-methionine = 5-methylaminomethyl-2-thiouridine(34) in tRNA + S-adenosyl-L-homocysteine + H(+). Its function is as follows. Catalyzes the last two steps in the biosynthesis of 5-methylaminomethyl-2-thiouridine (mnm(5)s(2)U) at the wobble position (U34) in tRNA. Catalyzes the FAD-dependent demodification of cmnm(5)s(2)U34 to nm(5)s(2)U34, followed by the transfer of a methyl group from S-adenosyl-L-methionine to nm(5)s(2)U34, to form mnm(5)s(2)U34. This is tRNA 5-methylaminomethyl-2-thiouridine biosynthesis bifunctional protein MnmC from Aromatoleum aromaticum (strain DSM 19018 / LMG 30748 / EbN1) (Azoarcus sp. (strain EbN1)).